Consider the following 687-residue polypeptide: DNA-directed RNA polymerase subunit beta' (687 aa).

4 residues coordinate Zn(2+): cysteine 69, cysteine 71, cysteine 87, and cysteine 90. Positions 493, 495, and 497 each coordinate Mg(2+).

This sequence belongs to the RNA polymerase beta' chain family. RpoC1 subfamily. In terms of assembly, in plastids the minimal PEP RNA polymerase catalytic core is composed of four subunits: alpha, beta, beta', and beta''. When a (nuclear-encoded) sigma factor is associated with the core the holoenzyme is formed, which can initiate transcription. Requires Mg(2+) as cofactor. Zn(2+) serves as cofactor.

It localises to the plastid. The protein localises to the chloroplast. The catalysed reaction is RNA(n) + a ribonucleoside 5'-triphosphate = RNA(n+1) + diphosphate. Functionally, DNA-dependent RNA polymerase catalyzes the transcription of DNA into RNA using the four ribonucleoside triphosphates as substrates. The sequence is that of DNA-directed RNA polymerase subunit beta' from Angiopteris evecta (Mule's foot fern).